A 761-amino-acid chain; its full sequence is Subtilisin-like protease SBT3.15 (761 aa).

An N-terminal signal peptide occupies residues 1 to 21 (MENSFLSSKLVFLLAIALVLF). Positions 22-120 (LNTELSFLTA…VIPNRILKLK (99 aa)) are cleaved as a propeptide — activation peptide. In terms of domain architecture, Inhibitor I9 spans 41–119 (VYIVYLGQRE…HVIPNRILKL (79 aa)). A Peptidase S8 domain is found at 134–613 (PTSFSSSSSA…GGLVNPEKAA (480 aa)). N151 is a glycosylation site (N-linked (GlcNAc...) asparagine). The active-site Charge relay system is D164. An N-linked (GlcNAc...) asparagine glycan is attached at N197. Catalysis depends on H241, which acts as the Charge relay system. N256 and N384 each carry an N-linked (GlcNAc...) asparagine glycan. S544 serves as the catalytic Charge relay system. An N-linked (GlcNAc...) asparagine glycan is attached at N636.

This sequence belongs to the peptidase S8 family.

It is found in the secreted. In Arabidopsis thaliana (Mouse-ear cress), this protein is Subtilisin-like protease SBT3.15.